A 509-amino-acid chain; its full sequence is ATP synthase subunit beta (509 aa).

167-174 (GGAGVGKT) contributes to the ATP binding site. A disordered region spans residues 476-509 (ESLGAKMEDTSGDGAPAQSDSKSDSKGDDADKDA). Residues 496 to 509 (SKSDSKGDDADKDA) show a composition bias toward basic and acidic residues.

Belongs to the ATPase alpha/beta chains family. F-type ATPases have 2 components, CF(1) - the catalytic core - and CF(0) - the membrane proton channel. CF(1) has five subunits: alpha(3), beta(3), gamma(1), delta(1), epsilon(1). CF(0) has three main subunits: a(1), b(2) and c(9-12). The alpha and beta chains form an alternating ring which encloses part of the gamma chain. CF(1) is attached to CF(0) by a central stalk formed by the gamma and epsilon chains, while a peripheral stalk is formed by the delta and b chains.

It is found in the cell membrane. It catalyses the reaction ATP + H2O + 4 H(+)(in) = ADP + phosphate + 5 H(+)(out). Produces ATP from ADP in the presence of a proton gradient across the membrane. The catalytic sites are hosted primarily by the beta subunits. This Mycobacterium sp. (strain KMS) protein is ATP synthase subunit beta.